We begin with the raw amino-acid sequence, 106 residues long: UPF0145 protein PP_2873 (106 aa).

This sequence belongs to the UPF0145 family.

This is UPF0145 protein PP_2873 from Pseudomonas putida (strain ATCC 47054 / DSM 6125 / CFBP 8728 / NCIMB 11950 / KT2440).